Here is a 347-residue protein sequence, read N- to C-terminus: DNA-directed RNA polymerase subunit alpha (347 aa).

Positions 1–226 (MLISQRPTLS…ELFGLARELN (226 aa)) are alpha N-terminal domain (alpha-NTD). An alpha C-terminal domain (alpha-CTD) region spans residues 243-347 (HIASFALPID…EQDYAETEQL (105 aa)).

The protein belongs to the RNA polymerase alpha chain family. Homodimer. The RNAP catalytic core consists of 2 alpha, 1 beta, 1 beta' and 1 omega subunit. When a sigma factor is associated with the core the holoenzyme is formed, which can initiate transcription.

The enzyme catalyses RNA(n) + a ribonucleoside 5'-triphosphate = RNA(n+1) + diphosphate. Functionally, DNA-dependent RNA polymerase catalyzes the transcription of DNA into RNA using the four ribonucleoside triphosphates as substrates. This chain is DNA-directed RNA polymerase subunit alpha, found in Mycobacterium bovis (strain ATCC BAA-935 / AF2122/97).